The primary structure comprises 327 residues: Beta-1,4-galactosyltransferase 7 (327 aa).

Over 1-30 the chain is Cytoplasmic; that stretch reads MLPSRRKAAQLPWEDGRARLLPGGLRRKCS. A helical; Signal-anchor for type II membrane protein transmembrane segment spans residues 31–51; it reads IFHLFIAFLLLVFFSLLWLQL. At 52-327 the chain is on the lumenal side; sequence SCSGDMAQVT…KTATPWCIFG (276 aa). The segment at 61–88 is disordered; the sequence is TRGQGQETSGPPRACPPEPPPEHWEEDE. UDP-alpha-D-galactose-binding positions include 100 to 104 and 139 to 141; these read PFRER and FNR. N-linked (GlcNAc...) asparagine glycosylation is present at asparagine 154. Residues 164–165, tyrosine 194, and tryptophan 224 contribute to the UDP-alpha-D-galactose site; that span reads VD. Aspartate 165 lines the Mn(2+) pocket. 226–229 is a binding site for N-acetyl-D-glucosamine; sequence REDD. Histidine 257 serves as a coordination point for Mn(2+). Residues 257–259 and arginine 266 each bind UDP-alpha-D-galactose; that span reads HLH.

Belongs to the glycosyltransferase 7 family. Mn(2+) serves as cofactor.

It is found in the golgi apparatus. The protein resides in the golgi stack membrane. The catalysed reaction is 3-O-(beta-D-xylosyl)-L-seryl-[protein] + UDP-alpha-D-galactose = 3-O-(beta-D-galactosyl-(1-&gt;4)-beta-D-xylosyl)-L-seryl-[protein] + UDP + H(+). Its pathway is protein modification; protein glycosylation. Functionally, required for the biosynthesis of the tetrasaccharide linkage region of proteoglycans, especially for small proteoglycans in skin fibroblasts. The polypeptide is Beta-1,4-galactosyltransferase 7 (B4galt7) (Mus musculus (Mouse)).